Here is a 366-residue protein sequence, read N- to C-terminus: MTAMMKAAVFVEPGRIELADKPIPDIGPNDALVRITTTTICGTDVHILKGEYPVAKGLTVGHEPVGIIEKLGSAVTGYREGQRVIAGAICPNFNSYAAQDGVASQDGSYLMASGQCGCHGYKATAGWRFGNMIDGTQAEYVLVPDAQANLTPIPDGLTDEQVLMCPDIMSTGFKGAENANIRIGHTVAVFAQGPIGLCATAGARLCGATTIIAIDGNDHRLEIARKMGADVVLNFRNCDVVDEVMKLTGGRGVDASIEALGTQATFEQSLRVLKPGGTLSSLGVYSSDLTIPLSAFAAGLGDHKINTALCPGGKERMRRLINVIESGRVDLGALVTHQYRLDDIVAAYDLFANQRDGVLKIAIKPH.

Cys-41, His-62, Glu-63, and Asp-167 together coordinate Zn(2+).

This sequence belongs to the zinc-containing alcohol dehydrogenase family. Homotetramer. The cofactor is Zn(2+).

It carries out the reaction a primary alcohol + NAD(+) = an aldehyde + NADH + H(+). The catalysed reaction is a secondary alcohol + NAD(+) = a ketone + NADH + H(+). The enzyme catalyses (R,R)-butane-2,3-diol + NAD(+) = (R)-acetoin + NADH + H(+). It catalyses the reaction an aldehyde + NAD(+) + H2O = a carboxylate + NADH + 2 H(+). Its function is as follows. Multifunctional alcohol dehydrogenase exhibiting NAD(+)-dependent dehydrogenase activities for 2,3-butanediol, ethanol and acetaldehyde, and reductase activities for acetoin (NADH-dependent), and diacetyl and acetaldehyde (independently of whether NADH or NADPH is the reductant). The rate of oxidation of 2,3-butanediol is much higher than for the oxidation of ethanol. Has acetaldehyde dehydrogenase activity leading to acetate formation. May function in the release of excess reducing power in the absence of exogenous hydrogen acceptors such as oxygen. The protein is Alcohol dehydrogenase (adh) of Cupriavidus necator (Alcaligenes eutrophus).